Here is a 1388-residue protein sequence, read N- to C-terminus: DNA-directed RNA polymerase subunit beta (1388 aa).

This sequence belongs to the RNA polymerase beta chain family. The RNAP catalytic core consists of 2 alpha, 1 beta, 1 beta' and 1 omega subunit. When a sigma factor is associated with the core the holoenzyme is formed, which can initiate transcription.

It carries out the reaction RNA(n) + a ribonucleoside 5'-triphosphate = RNA(n+1) + diphosphate. DNA-dependent RNA polymerase catalyzes the transcription of DNA into RNA using the four ribonucleoside triphosphates as substrates. The protein is DNA-directed RNA polymerase subunit beta of Xylella fastidiosa (strain Temecula1 / ATCC 700964).